Here is a 309-residue protein sequence, read N- to C-terminus: Glutaminase (309 aa).

7 residues coordinate substrate: S65, N117, E162, N169, Y193, Y245, and V263.

The protein belongs to the glutaminase family. As to quaternary structure, homotetramer.

It catalyses the reaction L-glutamine + H2O = L-glutamate + NH4(+). This Clostridioides difficile (strain 630) (Peptoclostridium difficile) protein is Glutaminase.